The primary structure comprises 2058 residues: Unconventional myosin-X (2058 aa).

M1 is subject to N-acetylmethionine. The Myosin motor domain maps to 63–739 (EGVDDMASLT…LEQKLEKRRE (677 aa)). ATP is bound by residues N104, Y113, 160–165 (GAGKTE), and N215. Positions 619-641 (LHSLMATLSSSNPFFVRCIKPNM) are actin-binding. 3 IQ domains span residues 742–763 (VSHA…KQYR), 764–787 (KVLY…RFLH), and 788–817 (LKKA…EKRE). Residues 814–883 (EKREQEEKKK…LTRELEKQKE (70 aa)) form an SAH region. Disordered regions lie at residues 819–840 (EEKK…RERE) and 847–866 (ELRA…EALQ). Positions 847–861 (ELRAQQEEETRKQQE) are enriched in basic and acidic residues. The stretch at 884–934 (NKQVEEILRLEKEIEDLQRMKEQQELSLTEASLQKLQERRDQELRRLEEEA) forms a coiled coil. A phosphoserine mark is found at S962, S965, and S968. Positions 964 to 1090 (GSEFSSELAE…DLPSPDGDYD (127 aa)) are disordered. Positions 989 to 1003 (PEEEVDEGFEADDDA) are enriched in acidic residues. Over residues 1040-1049 (VVPTSPSADS) the composition is skewed to polar residues. Residues 1060 to 1071 (SGSLHNSSSGES) show a composition bias toward low complexity. A Phosphothreonine modification is found at T1158. PH domains are found at residues 1212-1310 (EALK…QVHA) and 1392-1497 (EFIV…NVTD). The MyTH4 domain maps to 1547–1695 (LPYGDINLNL…PSRDEIEALI (149 aa)). Positions 1700-2044 (MTSTVYCHGG…AYISMIVKKR (345 aa)) constitute an FERM domain.

This sequence belongs to the TRAFAC class myosin-kinesin ATPase superfamily. Myosin family. As to quaternary structure, monomer, when in an inactive conformation in the cytosol. Homodimer in its active, membrane-bound conformation; antiparallel coiled coil-mediated dimer formation. Interacts strongly with CALM3 and weakly with CALM, the CALM3 interaction is essential for function in filopodial extension and motility. Interacts with ECPAS. Interacts with NEO1. Interacts with ITGB1 and ITGB3. Interacts with VASP. Interacts with DCC and ITGB5; the presence of DCC inhibits ITGB5 binding. Interacts with tubulin; ITGB5 or DCC binding inhibits tubulin binding. In terms of processing, the initiator methionine for isoform Headless is removed. Ubiquitous.

It is found in the cytoplasm. It localises to the cytosol. Its subcellular location is the cell projection. The protein localises to the lamellipodium. The protein resides in the ruffle. It is found in the cytoskeleton. It localises to the filopodium tip. Its subcellular location is the cell cortex. The protein localises to the filopodium membrane. Functionally, myosins are actin-based motor molecules with ATPase activity. Unconventional myosins serve in intracellular movements. MYO10 binds to actin filaments and actin bundles and functions as a plus end-directed motor. Moves with higher velocity and takes larger steps on actin bundles than on single actin filaments. The tail domain binds to membranous compartments containing phosphatidylinositol 3,4,5-trisphosphate or integrins, and mediates cargo transport along actin filaments. Regulates cell shape, cell spreading and cell adhesion. Stimulates the formation and elongation of filopodia. In hippocampal neurons it induces the formation of dendritic filopodia by trafficking the actin-remodeling protein VASP to the tips of filopodia, where it promotes actin elongation. Plays a role in formation of the podosome belt in osteoclasts. Functions as a dominant-negative regulator of isoform 1, suppressing its filopodia-inducing and axon outgrowth-promoting activities. In hippocampal neurons, it increases VASP retention in spine heads to induce spine formation and spine head expansion. The polypeptide is Unconventional myosin-X (MYO10) (Homo sapiens (Human)).